Here is a 131-residue protein sequence, read N- to C-terminus: RxLR effector protein 62 (131 aa).

A signal peptide spans 1-19 (MRLDILLFTLSSSTSLALS). The short motif at 49–60 (RHLREEPANEAR) is the RxLR-dEER element. N-linked (GlcNAc...) asparagine glycosylation occurs at asparagine 61.

This sequence belongs to the RxLR effector family.

It localises to the secreted. Its subcellular location is the host cell. Its function is as follows. Secreted effector that suppresses callose deposition, a hallmark of pathogen-associated molecular pattern (PAMP)-triggered immunity (PTI) and renders host plants more susceptible to bacterial infection. Reduces host plant responsiveness to salicylic acid (SA) in haustoriated cells into which host-translocated effectors are delivered. In Hyaloperonospora arabidopsidis (strain Emoy2) (Downy mildew agent), this protein is RxLR effector protein 62.